The sequence spans 1390 residues: DNA-directed RNA polymerase subunit beta (1390 aa).

Positions 556–576 (KLADQDAENDPDSDLGTKSSN) are disordered.

Belongs to the RNA polymerase beta chain family. In terms of assembly, the RNAP catalytic core consists of 2 alpha, 1 beta, 1 beta' and 1 omega subunit. When a sigma factor is associated with the core the holoenzyme is formed, which can initiate transcription.

It carries out the reaction RNA(n) + a ribonucleoside 5'-triphosphate = RNA(n+1) + diphosphate. Its function is as follows. DNA-dependent RNA polymerase catalyzes the transcription of DNA into RNA using the four ribonucleoside triphosphates as substrates. This Mycoplasmoides gallisepticum (strain R(low / passage 15 / clone 2)) (Mycoplasma gallisepticum) protein is DNA-directed RNA polymerase subunit beta.